The primary structure comprises 78 residues: Putative defensin-like protein 288 (78 aa).

The first 21 residues, 1–21, serve as a signal peptide directing secretion; sequence MSNLRLTIAVFLAALFQTLWW.

The protein belongs to the DEFL family.

The protein localises to the secreted. The chain is Putative defensin-like protein 288 from Arabidopsis thaliana (Mouse-ear cress).